Consider the following 254-residue polypeptide: Nodulation protein J (254 aa).

6 helical membrane passes run 25 to 45 (ASVLGSVIDPLIMLFGLGVGL), 60 to 80 (FLACGLILTSAMSASNYEMLY), 106 to 126 (LIGEVLWAAYEGVVAGTIVAV), 133 to 153 (YIPGWSVIYILPDILFVALIF), 169 to 189 (LFAFYQSIAIAPLVFLSGVIV), and 230 to 250 (LLLSLLYASVMVFISAKVICV). Residues 25–251 (ASVLGSVIDP…FISAKVICVR (227 aa)) enclose the ABC transmembrane type-2 domain.

The protein belongs to the ABC-2 integral membrane protein family. Lipooligosaccharide exporter (TC 3.A.1.102) subfamily. As to quaternary structure, the complex is composed of two ATP-binding proteins (NodI) and two transmembrane proteins (NodJ).

The protein resides in the cell inner membrane. Functionally, part of the ABC transporter complex NodIJ involved in the export of the nodulation factors (Nod factors), the bacterial signal molecules that induce symbiosis and subsequent nodulation induction. Nod factors are LCO (lipo-chitin oligosaccharide), a modified beta-1,4-linked N-acetylglucosamine oligosaccharide. This subunit encodes the transporter. This is Nodulation protein J (nodJ) from Azorhizobium caulinodans (strain ATCC 43989 / DSM 5975 / JCM 20966 / LMG 6465 / NBRC 14845 / NCIMB 13405 / ORS 571).